A 136-amino-acid chain; its full sequence is Class I hydrophobin 16 (136 aa).

An N-terminal signal peptide occupies residues 1–19 (MKFTSVIALVATAATLVGA). Cystine bridges form between Cys-58/Cys-115, Cys-65/Cys-109, Cys-66/Cys-99, and Cys-116/Cys-129. A glycan (N-linked (GlcNAc...) asparagine) is linked at Asn-74.

The protein belongs to the fungal hydrophobin family. In terms of assembly, self-assembles to form functional amyloid fibrils called rodlets. Self-assembly into fibrillar rodlets occurs spontaneously at hydrophobic:hydrophilic interfaces and the rodlets further associate laterally to form amphipathic monolayers.

Its subcellular location is the secreted. The protein localises to the cell wall. In terms of biological role, aerial growth, conidiation, and dispersal of filamentous fungi in the environment rely upon a capability of their secreting small amphipathic proteins called hydrophobins (HPBs) with low sequence identity. Class I can self-assemble into an outermost layer of rodlet bundles on aerial cell surfaces, conferring cellular hydrophobicity that supports fungal growth, development and dispersal; whereas Class II form highly ordered films at water-air interfaces through intermolecular interactions but contribute nothing to the rodlet structure. Hydph16 is a class I hydrophobin that has specific functions in aerial mycelium formation, cell wall stress protection, and cell wall structure formation, but does not seem to be involved in mycelial hydrophobicity. Specifically functions in resisting cell wall synthesis inhibitors. This chain is Class I hydrophobin 16, found in Pleurotus ostreatus (strain PC15) (Oyster mushroom).